A 340-amino-acid polypeptide reads, in one-letter code: Glycerol-3-phosphate dehydrogenase [NAD(P)+] (340 aa).

S14, F15, R35, and K108 together coordinate NADPH. The sn-glycerol 3-phosphate site is built by K108 and G136. A140 contacts NADPH. 5 residues coordinate sn-glycerol 3-phosphate: K191, D244, S254, R255, and N256. K191 serves as the catalytic Proton acceptor. R255 is an NADPH binding site. Positions 279 and 281 each coordinate NADPH.

The protein belongs to the NAD-dependent glycerol-3-phosphate dehydrogenase family.

It is found in the cytoplasm. It catalyses the reaction sn-glycerol 3-phosphate + NAD(+) = dihydroxyacetone phosphate + NADH + H(+). The enzyme catalyses sn-glycerol 3-phosphate + NADP(+) = dihydroxyacetone phosphate + NADPH + H(+). The protein operates within membrane lipid metabolism; glycerophospholipid metabolism. Functionally, catalyzes the reduction of the glycolytic intermediate dihydroxyacetone phosphate (DHAP) to sn-glycerol 3-phosphate (G3P), the key precursor for phospholipid synthesis. The polypeptide is Glycerol-3-phosphate dehydrogenase [NAD(P)+] (Azotobacter vinelandii (strain DJ / ATCC BAA-1303)).